Reading from the N-terminus, the 453-residue chain is Gamma-aminobutyric acid receptor subunit alpha-6 (453 aa).

The N-terminal stretch at 1–19 (MLLLLPWLFSLLWIENAQA) is a signal peptide. Residues 20–243 (QLEDEGNFYS…FHLQRKMGYF (224 aa)) are Extracellular-facing. A glycan (N-linked (GlcNAc...) asparagine) is linked at Asn31. Arg84 is a binding site for 4-aminobutanoate. N-linked (GlcNAc...) asparagine glycosylation is found at Asn128 and Asn141. Thr147 serves as a coordination point for 4-aminobutanoate. Residues Cys156 and Cys170 are joined by a disulfide bond. The chain crosses the membrane as a helical span at residues 244–264 (MIQIYTPCIMTVILSQVSFWI). At 265 to 270 (NKESVP) the chain is on the cytoplasmic side. A helical membrane pass occupies residues 271–290 (ARTVFGITTVLTMTTLSISA). Over 291-304 (RHSLPKVSYATAMD) the chain is Extracellular. Residues 305-325 (WFIAVCFAFVFSALIEFAAVN) traverse the membrane as a helical segment. Residues 326 to 422 (YFTNLQSQKA…GTSKIDQYSR (97 aa)) are Cytoplasmic-facing. The residue at position 375 (Ser375) is a Phosphoserine. The residue at position 403 (Thr403) is a Phosphothreonine. A helical transmembrane segment spans residues 423–443 (ILFPVAFAGFNLVYWIVYLSK). The Extracellular portion of the chain corresponds to 444–453 (DTMEVSSTVE).

This sequence belongs to the ligand-gated ion channel (TC 1.A.9) family. Gamma-aminobutyric acid receptor (TC 1.A.9.5) subfamily. GABRA6 sub-subfamily. As to quaternary structure, heteropentamer, formed by a combination of alpha (GABRA1-6), beta (GABRB1-3), gamma (GABRG1-3), delta (GABRD), epsilon (GABRE), rho (GABRR1-3), pi (GABRP) and theta (GABRQ) chains, each subunit exhibiting distinct physiological and pharmacological properties. Binds UBQLN1. In terms of tissue distribution, expressed in brain, in cerebellar granule cells.

The protein localises to the postsynaptic cell membrane. It localises to the cell membrane. The enzyme catalyses chloride(in) = chloride(out). Its function is as follows. Alpha subunit of the heteropentameric ligand-gated chloride channel gated by gamma-aminobutyric acid (GABA), a major inhibitory neurotransmitter in the brain. GABA-gated chloride channels, also named GABA(A) receptors (GABAAR), consist of five subunits arranged around a central pore and contain GABA active binding site(s) located at the alpha and beta subunit interface(s). When activated by GABA, GABAARs selectively allow the flow of chloride anions across the cell membrane down their electrochemical gradient. Alpha-6/GABRA6 subunits are found at both synaptic and extrasynaptic sites. Chloride influx into the postsynaptic neuron following GABAAR opening decreases the neuron ability to generate a new action potential, thereby reducing nerve transmission. Extrasynaptic alpha-6-containing receptors contribute to the tonic GABAergic inhibition. Alpha-6 subunits are also present on glutamatergic synapses. This chain is Gamma-aminobutyric acid receptor subunit alpha-6, found in Rattus norvegicus (Rat).